Here is a 314-residue protein sequence, read N- to C-terminus: Pantothenate kinase (314 aa).

93 to 100 (GSVAVGKS) is a binding site for ATP.

Belongs to the prokaryotic pantothenate kinase family.

The protein resides in the cytoplasm. The catalysed reaction is (R)-pantothenate + ATP = (R)-4'-phosphopantothenate + ADP + H(+). Its pathway is cofactor biosynthesis; coenzyme A biosynthesis; CoA from (R)-pantothenate: step 1/5. The polypeptide is Pantothenate kinase (Shewanella denitrificans (strain OS217 / ATCC BAA-1090 / DSM 15013)).